A 215-amino-acid chain; its full sequence is L-fuculose phosphate aldolase (215 aa).

Residues 28–29 (GN), 43–44 (TG), and 71–72 (SS) contribute to the substrate site. Glu-73 serves as the catalytic Proton donor/acceptor. Positions 73, 92, 94, and 155 each coordinate Zn(2+).

Belongs to the aldolase class II family. AraD/FucA subfamily. Homotetramer. The cofactor is Zn(2+).

The catalysed reaction is L-fuculose 1-phosphate = (S)-lactaldehyde + dihydroxyacetone phosphate. Its pathway is carbohydrate degradation; L-fucose degradation; L-lactaldehyde and glycerone phosphate from L-fucose: step 3/3. Its function is as follows. Involved in the degradation of L-fucose and D-arabinose. Catalyzes the reversible cleavage of L-fuculose 1-phosphate (Fuc1P) to yield dihydroxyacetone phosphate (DHAP) and L-lactaldehyde. The protein is L-fuculose phosphate aldolase of Escherichia coli O157:H7.